Reading from the N-terminus, the 419-residue chain is Carboxypeptidase A1 (419 aa).

The N-terminal stretch at 1 to 16 (MKRLLILSLLLEAVCG) is a signal peptide. Residues 17-110 (NENFVGHQVL…KQQMSAFQAR (94 aa)) constitute a propeptide, activation peptide. Positions 121–414 (TYHTLDEIYE…LALLTIMDHT (294 aa)) constitute a Peptidase M14 domain. Residues His-179 and Glu-182 each coordinate Zn(2+). Substrate contacts are provided by residues 179-182 (HSRE), Arg-237, and 254-255 (NR). A disulfide bridge links Cys-248 with Cys-271. His-306 lines the Zn(2+) pocket. Substrate is bound by residues 307–308 (SY) and Tyr-358. Glu-380 serves as the catalytic Proton donor/acceptor.

It belongs to the peptidase M14 family. As to quaternary structure, monomer. May form a complex with proelastase 2. It depends on Zn(2+) as a cofactor.

The protein resides in the secreted. It catalyses the reaction Release of a C-terminal amino acid, but little or no action with -Asp, -Glu, -Arg, -Lys or -Pro.. It carries out the reaction leukotriene C4 + H2O = leukotriene F4 + glycine. Carboxypeptidase that catalyzes the release of a C-terminal amino acid, but has little or no action with -Asp, -Glu, -Arg, -Lys or -Pro. Catalyzes the conversion of leukotriene C4 to leukotriene F4 via the hydrolysis of an amide bond. The protein is Carboxypeptidase A1 of Rattus norvegicus (Rat).